The chain runs to 299 residues: Undecaprenyl-diphosphatase (299 aa).

Helical transmembrane passes span 10 to 32 (LFSLMILLAATSELLAACWRNLV), 63 to 83 (PGVSATAVIQLGSILAVIAYF), 112 to 132 (LAIAIGTMPILLAGMAIKLFW), 143 to 163 (LPSIAVVSIVMALLLALAESF), 178 to 198 (GFVVGLAQALALIPGVSRSGS), 213 to 233 (AARFCFLLGIPAITLAGLVEL), 243 to 263 (GGVLPLLVGIVSAAFVSWLAI), and 276 to 296 (WIFVVYRLLFGVLVLAWWLSG).

It belongs to the UppP family.

The protein localises to the cell inner membrane. It carries out the reaction di-trans,octa-cis-undecaprenyl diphosphate + H2O = di-trans,octa-cis-undecaprenyl phosphate + phosphate + H(+). Its function is as follows. Catalyzes the dephosphorylation of undecaprenyl diphosphate (UPP). Confers resistance to bacitracin. The protein is Undecaprenyl-diphosphatase of Prochlorococcus marinus (strain MIT 9313).